Reading from the N-terminus, the 161-residue chain is Putative pre-16S rRNA nuclease (161 aa).

The tract at residues 141–161 is disordered; it reads AAGSPPGALVPRNRVDPDRHA.

It belongs to the YqgF nuclease family.

It localises to the cytoplasm. Its function is as follows. Could be a nuclease involved in processing of the 5'-end of pre-16S rRNA. This chain is Putative pre-16S rRNA nuclease, found in Clavibacter michiganensis subsp. michiganensis (strain NCPPB 382).